A 348-amino-acid chain; its full sequence is Outer membrane protein assembly factor BamC (348 aa).

A signal peptide spans 1–24 (MATLLQTSKVMKVAGLSLVVFLAA). Cysteine 25 is lipidated: N-palmitoyl cysteine. Residue cysteine 25 is the site of S-diacylglycerol cysteine attachment. The disordered stretch occupies residues 211 to 230 (SQQQEEAGQNNAKDSGALTV).

Belongs to the BamC family. Part of the Bam complex, which is composed of the outer membrane protein BamA, and four lipoproteins BamB, BamC, BamD and BamE.

Its subcellular location is the cell outer membrane. Part of the outer membrane protein assembly complex, which is involved in assembly and insertion of beta-barrel proteins into the outer membrane. In Xenorhabdus nematophila (strain ATCC 19061 / DSM 3370 / CCUG 14189 / LMG 1036 / NCIMB 9965 / AN6), this protein is Outer membrane protein assembly factor BamC.